The sequence spans 677 residues: DNA ligase (677 aa).

NAD(+) contacts are provided by residues 34-38 (DAEYD), 83-84 (SL), and E117. K119 serves as the catalytic N6-AMP-lysine intermediate. Positions 140, 175, 283, and 307 each coordinate NAD(+). Zn(2+) is bound by residues C401, C404, C419, and C425. Residues 594 to 677 (SHLSLLHGKT…QYISPNTNEN (84 aa)) form the BRCT domain.

The protein belongs to the NAD-dependent DNA ligase family. LigA subfamily. Mg(2+) is required as a cofactor. Mn(2+) serves as cofactor.

It catalyses the reaction NAD(+) + (deoxyribonucleotide)n-3'-hydroxyl + 5'-phospho-(deoxyribonucleotide)m = (deoxyribonucleotide)n+m + AMP + beta-nicotinamide D-nucleotide.. DNA ligase that catalyzes the formation of phosphodiester linkages between 5'-phosphoryl and 3'-hydroxyl groups in double-stranded DNA using NAD as a coenzyme and as the energy source for the reaction. It is essential for DNA replication and repair of damaged DNA. The chain is DNA ligase from Ehrlichia canis (strain Jake).